Here is a 552-residue protein sequence, read N- to C-terminus: CTP synthase (552 aa).

Residues 1–265 (MTKFVFVTGG…DRIVCEKLAL (265 aa)) form an amidoligase domain region. Ser-13 lines the CTP pocket. Ser-13 is a UTP binding site. ATP is bound by residues 14-19 (SLGKGI) and Asp-71. Residues Asp-71 and Glu-139 each contribute to the Mg(2+) site. Residues 146-148 (DIE), 186-191 (KTKPTQ), and Lys-222 contribute to the CTP site. UTP contacts are provided by residues 186 to 191 (KTKPTQ) and Lys-222. One can recognise a Glutamine amidotransferase type-1 domain in the interval 290–545 (TIGMVGKYVD…IKAALAHKQA (256 aa)). An L-glutamine-binding site is contributed by Gly-351. Cys-378 serves as the catalytic Nucleophile; for glutamine hydrolysis. L-glutamine is bound by residues 379–382 (LGMQ), Glu-402, and Arg-468. Residues His-518 and Glu-520 contribute to the active site.

Belongs to the CTP synthase family. In terms of assembly, homotetramer.

It carries out the reaction UTP + L-glutamine + ATP + H2O = CTP + L-glutamate + ADP + phosphate + 2 H(+). The enzyme catalyses L-glutamine + H2O = L-glutamate + NH4(+). The catalysed reaction is UTP + NH4(+) + ATP = CTP + ADP + phosphate + 2 H(+). Its pathway is pyrimidine metabolism; CTP biosynthesis via de novo pathway; CTP from UDP: step 2/2. Its activity is regulated as follows. Allosterically activated by GTP, when glutamine is the substrate; GTP has no effect on the reaction when ammonia is the substrate. The allosteric effector GTP functions by stabilizing the protein conformation that binds the tetrahedral intermediate(s) formed during glutamine hydrolysis. Inhibited by the product CTP, via allosteric rather than competitive inhibition. Its function is as follows. Catalyzes the ATP-dependent amination of UTP to CTP with either L-glutamine or ammonia as the source of nitrogen. Regulates intracellular CTP levels through interactions with the four ribonucleotide triphosphates. The protein is CTP synthase of Herminiimonas arsenicoxydans.